Reading from the N-terminus, the 835-residue chain is Microcephalin (835 aa).

Positions 1-93 (MAAPILKDVV…AHIDESLFPA (93 aa)) constitute a BRCT 1 domain. The segment at 184–206 (KEKRENLSPTSSQLIQQSHDNPS) is disordered. A compositionally biased stretch (polar residues) spans 190–206 (LSPTSSQLIQQSHDNPS). Ser-279, Ser-287, Ser-296, and Ser-333 each carry phosphoserine. Thr-335 carries the post-translational modification Phosphothreonine. Positions 346-361 (HSRPRSSSVKRKRVSH) are enriched in basic residues. 2 disordered regions span residues 346–376 (HSRP…RKRS) and 418–442 (PDNL…PAQF). Residue Ser-548 is modified to Phosphoserine. The tract at residues 557–582 (GLKSTQNRGTTSKISNSSEGEAQSEH) is disordered. The span at 559-577 (KSTQNRGTTSKISNSSEGE) shows a compositional bias: polar residues. BRCT domains are found at residues 640–730 (SGRG…PFEL) and 751–833 (YRGT…NYLL).

Interacts with CDC27 and maybe other components of the APC/C complex. Interacts with histone variant H2AX under DNA damage conditions.

It localises to the cytoplasm. The protein localises to the cytoskeleton. It is found in the microtubule organizing center. The protein resides in the centrosome. Functionally, implicated in chromosome condensation and DNA damage induced cellular responses. May play a role in neurogenesis and regulation of the size of the cerebral cortex. This Gorilla gorilla gorilla (Western lowland gorilla) protein is Microcephalin.